The following is a 232-amino-acid chain: Large ribosomal subunit protein uL1 (232 aa).

This sequence belongs to the universal ribosomal protein uL1 family. Part of the 50S ribosomal subunit.

Its function is as follows. Binds directly to 23S rRNA. The L1 stalk is quite mobile in the ribosome, and is involved in E site tRNA release. In terms of biological role, protein L1 is also a translational repressor protein, it controls the translation of the L11 operon by binding to its mRNA. The protein is Large ribosomal subunit protein uL1 of Porphyromonas gingivalis (strain ATCC 33277 / DSM 20709 / CIP 103683 / JCM 12257 / NCTC 11834 / 2561).